The primary structure comprises 245 residues: 3-deoxy-manno-octulosonate cytidylyltransferase (245 aa).

This sequence belongs to the KdsB family.

The protein localises to the cytoplasm. The enzyme catalyses 3-deoxy-alpha-D-manno-oct-2-ulosonate + CTP = CMP-3-deoxy-beta-D-manno-octulosonate + diphosphate. It participates in nucleotide-sugar biosynthesis; CMP-3-deoxy-D-manno-octulosonate biosynthesis; CMP-3-deoxy-D-manno-octulosonate from 3-deoxy-D-manno-octulosonate and CTP: step 1/1. The protein operates within bacterial outer membrane biogenesis; lipopolysaccharide biosynthesis. Activates KDO (a required 8-carbon sugar) for incorporation into bacterial lipopolysaccharide in Gram-negative bacteria. This Acaryochloris marina (strain MBIC 11017) protein is 3-deoxy-manno-octulosonate cytidylyltransferase.